Consider the following 448-residue polypeptide: Mitochondrial distribution and morphology protein 10 (448 aa).

The protein belongs to the MDM10 family. In terms of assembly, component of the ER-mitochondria encounter structure (ERMES) or MDM complex, composed of MMM1, MDM10, MDM12 and MDM34. Associates with the mitochondrial outer membrane sorting assembly machinery SAM(core) complex.

It localises to the mitochondrion outer membrane. Component of the ERMES/MDM complex, which serves as a molecular tether to connect the endoplasmic reticulum and mitochondria. Components of this complex are involved in the control of mitochondrial shape and protein biogenesis and may function in phospholipid exchange. MDM10 is involved in the late assembly steps of the general translocase of the mitochondrial outer membrane (TOM complex). Functions in the TOM40-specific route of the assembly of outer membrane beta-barrel proteins, including the association of TOM40 with the receptor TOM22 and small TOM proteins. Can associate with the SAM(core) complex as well as the MDM12-MMM1 complex, both involved in late steps of the major beta-barrel assembly pathway, that is responsible for biogenesis of all outer membrane beta-barrel proteins. May act as a switch that shuttles between both complexes and channels precursor proteins into the TOM40-specific pathway. Plays a role in mitochondrial morphology and in the inheritance of mitochondria. The protein is Mitochondrial distribution and morphology protein 10 of Zygosaccharomyces rouxii (strain ATCC 2623 / CBS 732 / NBRC 1130 / NCYC 568 / NRRL Y-229).